Consider the following 260-residue polypeptide: Small ribosomal subunit protein uS2 (260 aa).

Residues 224-260 (GRQGQDAGEDSAEKTFADTADGEGDFEESSNNENQEA) form a disordered region. Over residues 243 to 260 (ADGEGDFEESSNNENQEA) the composition is skewed to acidic residues.

It belongs to the universal ribosomal protein uS2 family.

The protein is Small ribosomal subunit protein uS2 of Oenococcus oeni (strain ATCC BAA-331 / PSU-1).